Consider the following 141-residue polypeptide: Large ribosomal subunit protein uL11 (141 aa).

The protein belongs to the universal ribosomal protein uL11 family. Part of the ribosomal stalk of the 50S ribosomal subunit. Interacts with L10 and the large rRNA to form the base of the stalk. L10 forms an elongated spine to which L12 dimers bind in a sequential fashion forming a multimeric L10(L12)X complex. In terms of processing, one or more lysine residues are methylated.

Its function is as follows. Forms part of the ribosomal stalk which helps the ribosome interact with GTP-bound translation factors. This chain is Large ribosomal subunit protein uL11, found in Chlamydia felis (strain Fe/C-56) (Chlamydophila felis).